Consider the following 366-residue polypeptide: Spermidine/putrescine import ATP-binding protein PotA (366 aa).

Residues 8-239 (IRFENVTKQF…PINKFVADFI (232 aa)) enclose the ABC transporter domain. 41 to 48 (GPSGCGKT) contacts ATP.

This sequence belongs to the ABC transporter superfamily. Spermidine/putrescine importer (TC 3.A.1.11.1) family. In terms of assembly, the complex is composed of two ATP-binding proteins (PotA), two transmembrane proteins (PotB and PotC) and a solute-binding protein (PotD).

The protein resides in the cell membrane. The enzyme catalyses ATP + H2O + polyamine-[polyamine-binding protein]Side 1 = ADP + phosphate + polyamineSide 2 + [polyamine-binding protein]Side 1.. Its function is as follows. Part of the ABC transporter complex PotABCD involved in spermidine/putrescine import. Responsible for energy coupling to the transport system. In Listeria monocytogenes serotype 4b (strain F2365), this protein is Spermidine/putrescine import ATP-binding protein PotA.